The chain runs to 483 residues: Altronate oxidoreductase (483 aa).

NAD(+) is bound at residue 18–29; sequence IIQFGEGNFLRA.

This sequence belongs to the mannitol dehydrogenase family. UxaB subfamily.

The enzyme catalyses D-altronate + NAD(+) = keto-D-tagaturonate + NADH + H(+). The protein operates within carbohydrate metabolism; pentose and glucuronate interconversion. The sequence is that of Altronate oxidoreductase from Enterobacter sp. (strain 638).